Reading from the N-terminus, the 237-residue chain is MPVKDSSSNKKNQIGKLSERQRRILEVITDAVSLRGYPPSIREIGDAAGLQSTSSVAYQLKELEKKGYLRRDPNKPRAVDVRALPDPIPSKPGRKPGPKKSSVAISPDPAETSPTSFVPIVGSIAAGNPILAEENVDGYFPFPSEIVGDGDLFMLQVEGESMRDAGILHHDWVVVRSQPVAEQGEFVAALIEGEATVKEFHSDSSGVWLLPHNDAFDPIPAEHAEIMGKVVSILRKL.

The span at 1–12 shows a compositional bias: polar residues; sequence MPVKDSSSNKKN. The interval 1–20 is disordered; that stretch reads MPVKDSSSNKKNQIGKLSER. Positions 41 to 61 form a DNA-binding region, H-T-H motif; sequence IREIGDAAGLQSTSSVAYQLK. Residues 67 to 80 are compositionally biased toward basic and acidic residues; sequence GYLRRDPNKPRAVD. Residues 67–112 are disordered; the sequence is GYLRRDPNKPRAVDVRALPDPIPSKPGRKPGPKKSSVAISPDPAET. Catalysis depends on for autocatalytic cleavage activity residues Ser161 and Lys198.

It belongs to the peptidase S24 family. In terms of assembly, homodimer.

It catalyses the reaction Hydrolysis of Ala-|-Gly bond in repressor LexA.. Functionally, represses a number of genes involved in the response to DNA damage (SOS response), including recA and lexA. In the presence of single-stranded DNA, RecA interacts with LexA causing an autocatalytic cleavage which disrupts the DNA-binding part of LexA, leading to derepression of the SOS regulon and eventually DNA repair. This Corynebacterium diphtheriae (strain ATCC 700971 / NCTC 13129 / Biotype gravis) protein is LexA repressor.